A 74-amino-acid chain; its full sequence is MAKKESYEDMLGKLQDILSTLEDDNLNLEEGMKSYEDGVKLVNKLYKTLNSYEGKISVIKEEKEVEFENQDGDR.

The protein belongs to the XseB family. In terms of assembly, heterooligomer composed of large and small subunits.

The protein localises to the cytoplasm. The catalysed reaction is Exonucleolytic cleavage in either 5'- to 3'- or 3'- to 5'-direction to yield nucleoside 5'-phosphates.. Bidirectionally degrades single-stranded DNA into large acid-insoluble oligonucleotides, which are then degraded further into small acid-soluble oligonucleotides. The chain is Exodeoxyribonuclease 7 small subunit from Clostridium botulinum (strain Eklund 17B / Type B).